The primary structure comprises 335 residues: MKITRMHGAGGKVMQELIKDVILKNLEITSVNGGIGLESLDDSATIPIGDKEIVFTVDGHTVKPIFFPGGDIGRLAVSGTVNDLAVMGAKPLALSLSLIIPEGFNLEDLEKIVKSINETSKEAEVAIITGDTKVSDGVDDIIISTAGIGIVDRGKAIRDCNVQEGDAIIVSGNIGEHGLAILLSREGFDFETNIKSDVAPINKLIERVLEEGIQINAMKDPTRGGLADALNEMAEKSNIGITIFEDKIPISDEVQSICDILGLDPLTIANEGKVVMAVKKEDAERCLEILREHPLGKNAEIIGYATKEHKGVIIETIVGRRIVDMPIGDPIPRVC.

The protein belongs to the HypE family.

This is Putative hydrogenase expression/formation protein MJ0676 from Methanocaldococcus jannaschii (strain ATCC 43067 / DSM 2661 / JAL-1 / JCM 10045 / NBRC 100440) (Methanococcus jannaschii).